Reading from the N-terminus, the 653-residue chain is Large subunit GTPase 1 homolog (653 aa).

Residues 1-31 (MGRRRAPAGGSLGRALMRHQTQRSRSHRHTD) are disordered. Residues 16–28 (LMRHQTQRSRSHR) are compositionally biased toward basic residues. A phosphoserine mark is found at Ser93 and Ser97. The region spanning 164–445 (WRQLWRVIER…LCDCPGLVMP (282 aa)) is the CP-type G domain. 212–215 (NKAD) contacts GTP. Residues 251 to 358 (DSEEEANKDD…RKTPQKRQLH (108 aa)) form a disordered region. Ser252 bears the Phosphoserine mark. Basic and acidic residues predominate over residues 258-288 (KDDRQSNTAEFEHSSFDEAEISHSETEHLPA). Residues 299–333 (TTDEDDSEYEDCPEEEEDDWQTCSEEDGPEEEDCG) show a composition bias toward acidic residues. GTP contacts are provided by residues 394–401 (GYPNVGKS) and 438–441 (DCPG). The segment at 630 to 653 (SENGAGKPWKKHGNRNKKEKSCRL) is disordered. The segment covering 637–647 (PWKKHGNRNKK) has biased composition (basic residues).

Belongs to the TRAFAC class YlqF/YawG GTPase family. LSG1 subfamily.

The protein localises to the cytoplasm. The protein resides in the endoplasmic reticulum. It localises to the nucleus. It is found in the cajal body. The catalysed reaction is GTP + H2O = GDP + phosphate + H(+). Functionally, functions as a GTPase. May act by mediating the release of NMD3 from the 60S ribosomal subunit after export into the cytoplasm during the 60S ribosomal subunit maturation. This chain is Large subunit GTPase 1 homolog, found in Macaca fascicularis (Crab-eating macaque).